The primary structure comprises 137 residues: Large ribosomal subunit protein uL16 (137 aa).

It belongs to the universal ribosomal protein uL16 family. Part of the 50S ribosomal subunit.

In terms of biological role, binds 23S rRNA and is also seen to make contacts with the A and possibly P site tRNAs. This Pseudomonas syringae pv. tomato (strain ATCC BAA-871 / DC3000) protein is Large ribosomal subunit protein uL16.